Reading from the N-terminus, the 123-residue chain is uncharacterized protein (123 aa).

An N-terminal signal peptide occupies residues 1–25 (MKHGIKALLITLSLACAGMSHSALA). The segment covering 40-53 (EAPAAQSKAAVPAK) has biased composition (low complexity). Positions 40–62 (EAPAAQSKAAVPAKASDEEGTRV) are disordered. 2 HhH domains span residues 60–90 (TRVSINNASAEELARAMNGVGLKKAQAIVSY) and 91–120 (REEYGPFKTVEDLKQVPGMGNSLVERNLAV).

This is an uncharacterized protein from Escherichia coli (strain K12).